The following is a 162-amino-acid chain: SsrA-binding protein (162 aa).

The protein belongs to the SmpB family.

It localises to the cytoplasm. Functionally, required for rescue of stalled ribosomes mediated by trans-translation. Binds to transfer-messenger RNA (tmRNA), required for stable association of tmRNA with ribosomes. tmRNA and SmpB together mimic tRNA shape, replacing the anticodon stem-loop with SmpB. tmRNA is encoded by the ssrA gene; the 2 termini fold to resemble tRNA(Ala) and it encodes a 'tag peptide', a short internal open reading frame. During trans-translation Ala-aminoacylated tmRNA acts like a tRNA, entering the A-site of stalled ribosomes, displacing the stalled mRNA. The ribosome then switches to translate the ORF on the tmRNA; the nascent peptide is terminated with the 'tag peptide' encoded by the tmRNA and targeted for degradation. The ribosome is freed to recommence translation, which seems to be the essential function of trans-translation. This chain is SsrA-binding protein, found in Buchnera aphidicola subsp. Acyrthosiphon pisum (strain 5A).